The sequence spans 316 residues: Neuroguidin (316 aa).

Disordered stretches follow at residues 143-172 (SEAD…VKKY) and 280-316 (SALT…RKRH). A compositionally biased stretch (acidic residues) spans 145-157 (ADEGESDSGEDCA). A compositionally biased stretch (basic residues) spans 297 to 316 (KKSRKGPKKSKKRKGFRKRH).

The protein belongs to the SAS10 family. As to quaternary structure, part of the small subunit (SSU) processome, composed of more than 70 proteins and the RNA chaperone small nucleolar RNA (snoRNA) U3.

The protein resides in the nucleus. It localises to the nucleolus. It is found in the chromosome. The protein localises to the centromere. Its subcellular location is the cytoplasm. The protein resides in the cell projection. It localises to the axon. It is found in the dendrite. The protein localises to the filopodium. Part of the small subunit (SSU) processome, first precursor of the small eukaryotic ribosomal subunit. During the assembly of the SSU processome in the nucleolus, many ribosome biogenesis factors, an RNA chaperone and ribosomal proteins associate with the nascent pre-rRNA and work in concert to generate RNA folding, modifications, rearrangements and cleavage as well as targeted degradation of pre-ribosomal RNA by the RNA exosome. Its dissociation from the complex determines the transition from state pre-A1 to state pre-A1*. May inhibit mRNA translation. This is Neuroguidin (ngdn) from Xenopus tropicalis (Western clawed frog).